Reading from the N-terminus, the 500-residue chain is Glutathione reductase (500 aa).

FAD is bound by residues S12 and G13. Residue S12 coordinates glutathione. Glutathione is bound at residue R19. FAD-binding residues include E32, T39, C40, and K48. An intrachain disulfide couples C40 to C45. Y95 contributes to the glutathione binding site. A111 contributes to the FAD binding site. NADP(+) contacts are provided by I187, E190, R207, R213, and G272. FAD contacts are provided by D312 and T354. Residue R362 coordinates glutathione. V384 is an NADP(+) binding site. H485 lines the FAD pocket. H485 functions as the Proton acceptor in the catalytic mechanism.

Belongs to the class-I pyridine nucleotide-disulfide oxidoreductase family. As to quaternary structure, homodimer. FAD serves as cofactor.

The protein resides in the cytoplasm. It carries out the reaction 2 glutathione + NADP(+) = glutathione disulfide + NADPH + H(+). Catalyzes the reduction of glutathione disulfide (GSSG) to reduced glutathione (GSH). Constitutes the major mechanism to maintain a high GSH:GSSG ratio in the cytosol. This Plasmodium falciparum (isolate K1 / Thailand) protein is Glutathione reductase.